Consider the following 561-residue polypeptide: MKYIIMQDVFFIVLLLVLAIPLGIYMYKVMIGERVFLSRVLEPVERFGYRLMGVSEAGMSAKRYAGSVLAFSAIGFVFVMAVLMLQGFLPLNPQGMKGLSFSLAFNTAASFVSNTNWQAYSGESTLSYFSQSVGLTVQNFVSAATGIAVLFAVIRGFIWKKQKTVGNFWQDLFRVTLYILLPLSLVLAILLVSQGVVQSFADYSVVETLENGAKQLIPLGPAASQIAIKQLGTNGGGFFGANSAFPFENPSSFTNLIEMLAILLIPVALVVMFGRAVKDSKQGRAIMTAMMIVFVVGIVAITISEQFAGPSYQGVATSGSMEGKEVRFGVGGSSLFAASTTAASNGAVNAMHDSLTPLGGLVPMFFMQLGEVIFGGVGSGLYGMIGFIILTVFIAGLLVGRTPEYLGKKIEPYDMKMVCLLILVPPLLTLFGTAFAVMMPSVQASVAASGAHGFSEVLYAFTSMGNNNGSAFAGFAADTTFTNMVGALMMLFARFIPLIAALYLAQNMAGKSPVAASSGTLSTKNGMFIGLLIGVVVLVGALSFLPALALGPIADFFTTFK.

Helical transmembrane passes span 4-24 (IIMQDVFFIVLLLVLAIPLGI), 65-85 (AGSVLAFSAIGFVFVMAVLML), 134-154 (GLTVQNFVSAATGIAVLFAVI), 177-197 (LYILLPLSLVLAILLVSQGVV), 253-273 (FTNLIEMLAILLIPVALVVMF), 285-305 (AIMTAMMIVFVVGIVAITISE), 380-400 (GLYGMIGFIILTVFIAGLLVG), 417-437 (MVCLLILVPPLLTLFGTAFAV), 484-504 (MVGALMMLFARFIPLIAALYL), and 528-548 (FIGLLIGVVVLVGALSFLPAL).

The protein belongs to the KdpA family. As to quaternary structure, the system is composed of three essential subunits: KdpA, KdpB and KdpC.

It localises to the cell membrane. Part of the high-affinity ATP-driven potassium transport (or Kdp) system, which catalyzes the hydrolysis of ATP coupled with the electrogenic transport of potassium into the cytoplasm. This subunit binds the extracellular potassium ions and delivers the ions to the membrane domain of KdpB through an intramembrane tunnel. This chain is Potassium-transporting ATPase potassium-binding subunit, found in Listeria welshimeri serovar 6b (strain ATCC 35897 / DSM 20650 / CCUG 15529 / CIP 8149 / NCTC 11857 / SLCC 5334 / V8).